The primary structure comprises 292 residues: 33 kDa chaperonin (292 aa).

2 disulfide bridges follow: Cys-230/Cys-232 and Cys-263/Cys-266.

Belongs to the HSP33 family. Post-translationally, under oxidizing conditions two disulfide bonds are formed involving the reactive cysteines. Under reducing conditions zinc is bound to the reactive cysteines and the protein is inactive.

The protein resides in the cytoplasm. Redox regulated molecular chaperone. Protects both thermally unfolding and oxidatively damaged proteins from irreversible aggregation. Plays an important role in the bacterial defense system toward oxidative stress. The chain is 33 kDa chaperonin from Serratia proteamaculans (strain 568).